The chain runs to 847 residues: Lethal(3)malignant brain tumor-like protein 1 (847 aa).

2 stretches are compositionally biased toward basic and acidic residues: residues 65-82 and 144-155; these read FPREPPRNTGAERPEKGV and AVKEGHAKKDGD. Disordered stretches follow at residues 65–87, 142–163, and 237–296; these read FPREPPRNTGAERPEKGVGSEPI, AEAVKEGHAKKDGDSDVAPTSR, and VKKR…SEEK. MBT repeat units follow at residues 300-400, 408-507, and 516-611; these read WSWA…LQPP, FSWT…LTPP, and FIWE…LQPP. Residues 473–480 are interaction with monomethylated and dimethylated peptides; it reads FDNWDDTY. The CCHHC-type zinc-finger motif lies at 639–682; sequence SKYSFHHRKCPTPGCDGSGHVTGRFTAHYCLSGCPLAEKNQGKL. The Zn(2+) site is built by Cys648, Cys653, His666, and Cys672. The 65-residue stretch at 778–842 folds into the SAM domain; the sequence is WTIDEVFSFV…YNAILMFKNA (65 aa).

As to quaternary structure, homodimer.

The protein localises to the nucleus. Its function is as follows. Polycomb group (PcG) protein that specifically recognizes and binds mono- and dimethyllysine residues on target proteins, thereby acting as a 'reader' of a network of post-translational modifications. PcG proteins maintain the transcriptionally repressive state of genes: acts as a chromatin compaction factor by recognizing and binding mono- and dimethylated histone H1b/H1-4 at 'Lys-26' (H1bK26me1 and H1bK26me2) and histone H4 at 'Lys-20' (H4K20me1 and H4K20me2), leading to condense chromatin and repress transcription. The chain is Lethal(3)malignant brain tumor-like protein 1 (L3MBTL1) from Gallus gallus (Chicken).